A 284-amino-acid polypeptide reads, in one-letter code: Cell wall mannoprotein 1 (284 aa).

Positions 1–17 are cleaved as a signal peptide; that stretch reads MRFSALLVTLGLTGALA. Residues 176–234 show a composition bias toward low complexity; the sequence is SSTGTASSSAPATETATATETSTATGTVTETATSTPVIPTGTASGSASATPSTTATPTT. Residues 176-252 form a disordered region; sequence SSTGTASSSA…SSTGTATAST (77 aa).

Belongs to the cell wall mannoprotein 1 family. In terms of processing, galactomannoprotein, glycosylated.

The protein localises to the secreted. Its subcellular location is the cell wall. In terms of biological role, constitutive protein of the cell wall. Antigen target of host humoral immune response. The chain is Cell wall mannoprotein 1 from Aspergillus fumigatus (Neosartorya fumigata).